The following is a 1115-amino-acid chain: Disheveled-associated activator of morphogenesis 2 (1115 aa).

The GBD/FH3 domain occupies 40–416 (GPIPNPEELN…QIVLQDERGV (377 aa)). Residues 434-515 (MLINENEVKQ…ELVARHNESS (82 aa)) are a coiled coil. Disordered stretches follow at residues 510-605 (RHNE…SHPL) and 655-697 (QEGP…SATG). An FH1 domain is found at 518 to 694 (PVSSPPPPGG…TEKASRSMVS (177 aa)). Positions 540–583 (LPPPPPPLPFDSCPPPPAPPLPPGGPPIPPGAPPCFSSGPPPSH) are enriched in pro residues. The 448-residue stretch at 595–1042 (KKRIPQPSHP…DERRARMEFM (448 aa)) folds into the FH2 domain. The DAD domain occupies 1065-1095 (EESGEFDDLVSALRSGEVFDKDLSKFKRNRK).

This sequence belongs to the formin homology family. Interacts with DVL3. Interacts with INF2. In terms of tissue distribution, in early embryogenesis, expression is confined to embryonic ectoderm. Highly dynamic expression in later stages of gastrulation. In early somite stages, detected in posterior node and persists until 9-10 somites have developed when expression is concentrated in the chordoneural hinge. During organogenesis, expressed in the CNS, PNS, liver primordia, limb buds and genital tubercle.

Key regulator of the Wnt signaling pathway, which is required for various processes during development, such as dorsal patterning, determination of left/right symmetry or myelination in the central nervous system. Acts downstream of Wnt ligands and upstream of beta-catenin (CTNNB1). Required for canonical Wnt signaling pathway during patterning in the dorsal spinal cord by promoting the aggregation of Disheveled (Dvl) complexes, thereby clustering and formation of Wnt receptor signalosomes and potentiating Wnt activity. During dorsal patterning of the spinal cord, inhibits oligodendrocytes differentiation via interaction with PIP5K1A. Also regulates non-canonical Wnt signaling pathway. Acts downstream of PITX2 in the developing gut and is required for left/right asymmetry within dorsal mesentery: affects mesenchymal condensation by lengthening cadherin-based junctions through WNT5A and non-canonical Wnt signaling, inducing polarized condensation in the left dorsal mesentery necessary to initiate gut rotation. Together with DAAM1, required for myocardial maturation and sarcomere assembly. Is a regulator of actin nucleation and elongation, filopodia formation and podocyte migration. This chain is Disheveled-associated activator of morphogenesis 2, found in Mus musculus (Mouse).